The following is a 417-amino-acid chain: MSDPIRTKPKSSMQIDNAPTPHNTPASVLNPSYLKNGNPVRAQAQEQDDKIGTINEEDILANQPLLLQSIQDRLGSLVGQDSGYVGGLPKNVKEKLLSLKTLQSELFEVEKEFQVEMFELENKFLQKYKPIWEQRSRIISGQEQPKPEQIAKGQEIVESLNETELLVDEEEKAQNDSEEEQVKGIPSFWLTALENLPIVCDTITDRDAEVLEYLQDIGLEYLTDGRPGFKLLFRFDSSANPFFTNDILCKTYFYQKELGYSGDFIYDHAEGCEISWKDNAHNVTVDLEMRKQRNKTTKQVRTIEKITPIESFFNFFDPPKIQNEDQDEELEEDLEERLALDYSIGEQLKDKLIPRAVDWFTGAALEFEFEEDEEEADEDEDEEEDDDHGLEDDDGESAEEQDDFAGRPEQAPECKQS.

Residues 1–47 (MSDPIRTKPKSSMQIDNAPTPHNTPASVLNPSYLKNGNPVRAQAQEQ) are disordered. Over residues 10-35 (KSSMQIDNAPTPHNTPASVLNPSYLK) the composition is skewed to polar residues. Phosphothreonine occurs at positions 20 and 24. Residue serine 27 is modified to Phosphoserine. Residue lysine 50 forms a Glycyl lysine isopeptide (Lys-Gly) (interchain with G-Cter in ubiquitin) linkage. Residue threonine 53 is modified to Phosphothreonine. 6 positions are modified to phosphoserine: serine 69, serine 76, serine 82, serine 98, serine 104, and serine 140. Positions 143-362 (EQPKPEQIAK…IPRAVDWFTG (220 aa)) are interaction with NBA1. Residues serine 159 and serine 177 each carry the phosphoserine; by CK2 modification. Positions 330–356 (LEEDLEERLALDYSIGEQLKDKLIPRA) form a DNA-binding region, H-T-H motif. Positions 364–417 (ALEFEFEEDEEEADEDEDEEEDDDHGLEDDDGESAEEQDDFAGRPEQAPECKQS) are disordered. The span at 367-403 (FEFEEDEEEADEDEDEEEDDDHGLEDDDGESAEEQDD) shows a compositional bias: acidic residues. Residue serine 397 is modified to Phosphoserine; by CK2. Residues 404 to 417 (FAGRPEQAPECKQS) show a composition bias toward basic and acidic residues.

It belongs to the nucleosome assembly protein (NAP) family. As to quaternary structure, component of the GIN4 complex composed of at least BNI5, CDC3, CDC10, CDC11, CDC12, GIN4, NAP1 and SHS1 which forms a ring at the bud neck. Homodimer (in-vitro). Interacts with the B-type cyclin CLB2. Interacts with 60S ribosomal protein L18 (RPL18A or RPL18B), CKA2, CKI1, eukaryotic elongation factor 1 complex eEF1A (TEF1 or TEF2), FOL1, HSC82, HTA2, HTB2, HTZ1, KAP114, KCC4, NIS1, SSA1, SSA2, SSB1, SSC1, SHM1, SIP5 and TCO89. Interacts with NBA1. Interacts with histone H3/H4 heterodimers. Post-translationally, phosphorylation by CK2 is required for normal progression through S phase. CK2 phosphorylation is not required for correct bud formation nor histone binding.

It is found in the cytoplasm. It localises to the nucleus. The protein localises to the bud neck. Functionally, acidic protein, which assembles histones into an octamer (in vitro). Involved in the regulation of the localization and the function of the septins during mitosis. Involved in the function of B-type cyclins. In Saccharomyces cerevisiae (strain ATCC 204508 / S288c) (Baker's yeast), this protein is Nucleosome assembly protein.